The sequence spans 178 residues: Fimbrial adapter PapK (178 aa).

The signal sequence occupies residues 1–21; the sequence is MIKSTGALLLFAALSAGQAIA.

It localises to the secreted. Its subcellular location is the fimbrium. Adapter that links the pilus rod to the base of the tip fibrillum. Regulates the length of the tip fibrillum and joins it to the pilus rod. Pili are polar filaments radiating from the surface of the bacterium to a length of 0.5-1.5 micrometers and numbering 100-300 per cell, and enable bacteria to colonize the epithelium of specific host organs. This chain is Fimbrial adapter PapK (papK), found in Escherichia coli O6:H1 (strain CFT073 / ATCC 700928 / UPEC).